Consider the following 599-residue polypeptide: Dachshund homolog 2 (599 aa).

The DACHbox-N stretch occupies residues 69 to 155 (RMVDMHGMKV…LITRKDFETL (87 aa)). 3 disordered regions span residues 166 to 186 (RQMTRKQAVNSSRPGRPPKRS), 237 to 280 (LQGN…GPQH), and 370 to 409 (RIPESPSPAPSLEENHRPGSQTSSHTSSSVSSSPSQMDHH). The segment covering 237-262 (LQGNGSQNGTESEPDDLNSNTGGSES) has biased composition (polar residues). The span at 389–405 (SQTSSHTSSSVSSSPSQ) shows a compositional bias: low complexity. The tract at residues 453–533 (SSVETLLTNI…KTKRKLQEAL (81 aa)) is DACHbox-C. Residues 459 to 554 (LTNIQGLLKV…QALKQATTSD (96 aa)) adopt a coiled-coil conformation.

Belongs to the DACH/dachshund family. In terms of assembly, interacts with SIX6 and EYA2.

The protein resides in the nucleus. Its function is as follows. Transcription factor that is involved in regulation of organogenesis. Seems to be a regulator for SIX1 and SIX6. Seems to act as a corepressor of SIX6 in regulating proliferation by directly repressing cyclin-dependent kinase inhibitors, including the p27Kip1 promoter. Is recruited with SIX6 to the p27Kip1 promoter in embryonal retina. SIX6 corepression also seems to involve NCOR1, TBL1, HDAC1 and HDAC3. May be involved together with PAX3, SIX1, and EYA2 in regulation of myogenesis. In the developing somite, expression of DACH2 and PAX3 is regulated by the overlying ectoderm, and DACH2 and PAX3 positively regulate each other's expression. Probably binds to DNA via its DACHbox-N domain. This chain is Dachshund homolog 2 (DACH2), found in Homo sapiens (Human).